The primary structure comprises 238 residues: Probable transcriptional regulatory protein CAB166 (238 aa).

The protein belongs to the TACO1 family.

The protein resides in the cytoplasm. The sequence is that of Probable transcriptional regulatory protein CAB166 from Chlamydia abortus (strain DSM 27085 / S26/3) (Chlamydophila abortus).